The sequence spans 127 residues: Glycine cleavage system H protein (127 aa).

The region spanning Thr24–Lys105 is the Lipoyl-binding domain. Lys65 is subject to N6-lipoyllysine.

This sequence belongs to the GcvH family. The glycine cleavage system is composed of four proteins: P, T, L and H. The cofactor is (R)-lipoate.

In terms of biological role, the glycine cleavage system catalyzes the degradation of glycine. The H protein shuttles the methylamine group of glycine from the P protein to the T protein. This chain is Glycine cleavage system H protein, found in Chlorobaculum parvum (strain DSM 263 / NCIMB 8327) (Chlorobium vibrioforme subsp. thiosulfatophilum).